A 432-amino-acid polypeptide reads, in one-letter code: Alcohol acyltransferase 9 (432 aa).

Residues His156 and Asp379 each act as proton acceptor in the active site.

Belongs to the plant acyltransferase family. Expressed in fruit.

It catalyses the reaction 2-(methylsulfanyl)acetyl-CoA + butan-1-ol = butyl 2-(methylsulfanyl)acetate + CoA. It carries out the reaction ethanol + acetyl-CoA = ethyl acetate + CoA. The enzyme catalyses butan-1-ol + acetyl-CoA = butyl acetate + CoA. The catalysed reaction is butan-1-ol + propanoyl-CoA = butyl propanoate + CoA. Functionally, involved in the biosynthesis of volatile esters which confer kiwifruit flavor. Alcohol acyl transferase that can use a wide range of alcohols as substrate to produce esters. Exhibits acetyl-CoA:alcohol O-acyltransferase activity. The protein is Alcohol acyltransferase 9 of Actinidia eriantha (Velvet vine).